Consider the following 693-residue polypeptide: Glycine--tRNA ligase beta subunit (693 aa).

It belongs to the class-II aminoacyl-tRNA synthetase family. In terms of assembly, tetramer of two alpha and two beta subunits.

The protein localises to the cytoplasm. The enzyme catalyses tRNA(Gly) + glycine + ATP = glycyl-tRNA(Gly) + AMP + diphosphate. The chain is Glycine--tRNA ligase beta subunit from Vibrio campbellii (strain ATCC BAA-1116).